The primary structure comprises 68 residues: DNA gyrase inhibitor YacG (68 aa).

4 residues coordinate Zn(2+): Cys-14, Cys-17, Cys-29, and Cys-33.

The protein belongs to the DNA gyrase inhibitor YacG family. In terms of assembly, interacts with GyrB. Zn(2+) is required as a cofactor.

In terms of biological role, inhibits all the catalytic activities of DNA gyrase by preventing its interaction with DNA. Acts by binding directly to the C-terminal domain of GyrB, which probably disrupts DNA binding by the gyrase. The protein is DNA gyrase inhibitor YacG of Azorhizobium caulinodans (strain ATCC 43989 / DSM 5975 / JCM 20966 / LMG 6465 / NBRC 14845 / NCIMB 13405 / ORS 571).